The following is a 213-amino-acid chain: MELNKYIDHTLLKADATSADIKKICDEAIKYDFKSVCVNSCYTSLVKKSLENSSALVCTVVGFPLGAMSTKSKAFEAKTAIEDGADEIDMVINIGKLKEKDYDYVEKDIQAVRDATKGKVLKVIIETCLLTDEEKKKACEISVKCGADFVKTSTGFSTGGAKVEDVKLMKDTVADKAMVKASGGIHSREEALAMIENGADRIGASSGIKIVEG.

The active-site Proton donor/acceptor is the aspartate 89. Catalysis depends on lysine 151, which acts as the Schiff-base intermediate with acetaldehyde. Residue lysine 180 is the Proton donor/acceptor of the active site.

This sequence belongs to the DeoC/FbaB aldolase family. DeoC type 1 subfamily.

The protein resides in the cytoplasm. It carries out the reaction 2-deoxy-D-ribose 5-phosphate = D-glyceraldehyde 3-phosphate + acetaldehyde. It functions in the pathway carbohydrate degradation; 2-deoxy-D-ribose 1-phosphate degradation; D-glyceraldehyde 3-phosphate and acetaldehyde from 2-deoxy-alpha-D-ribose 1-phosphate: step 2/2. Functionally, catalyzes a reversible aldol reaction between acetaldehyde and D-glyceraldehyde 3-phosphate to generate 2-deoxy-D-ribose 5-phosphate. In Finegoldia magna (strain ATCC 29328 / DSM 20472 / WAL 2508) (Peptostreptococcus magnus), this protein is Deoxyribose-phosphate aldolase.